A 397-amino-acid polypeptide reads, in one-letter code: Riboflavin biosynthesis protein RibBA (397 aa).

Residues 1-199 (MFHRIEEALE…IEDLIAYRRH (199 aa)) are DHBP synthase. D-ribulose 5-phosphate is bound by residues 26 to 27 (RE), Asp-31, 138 to 142 (RAGHT), and Glu-162. Mg(2+) is bound at residue Glu-27. His-141 lines the Mg(2+) pocket. The GTP cyclohydrolase II stretch occupies residues 200–397 (HETLVTREVE…VNKLGHLLNL (198 aa)). 250-254 (RVHSE) contacts GTP. Residues Cys-255, Cys-266, and Cys-268 each contribute to the Zn(2+) site. GTP contacts are provided by residues Gln-271, 293–295 (EGR), and Thr-315. Asp-327 functions as the Proton acceptor; for GTP cyclohydrolase activity in the catalytic mechanism. Arg-329 serves as the catalytic Nucleophile; for GTP cyclohydrolase activity. Residues Thr-350 and Lys-355 each contribute to the GTP site.

In the N-terminal section; belongs to the DHBP synthase family. It in the C-terminal section; belongs to the GTP cyclohydrolase II family. Requires Mg(2+) as cofactor. The cofactor is Mn(2+). Zn(2+) is required as a cofactor.

The catalysed reaction is D-ribulose 5-phosphate = (2S)-2-hydroxy-3-oxobutyl phosphate + formate + H(+). It catalyses the reaction GTP + 4 H2O = 2,5-diamino-6-hydroxy-4-(5-phosphoribosylamino)-pyrimidine + formate + 2 phosphate + 3 H(+). Its pathway is cofactor biosynthesis; riboflavin biosynthesis; 2-hydroxy-3-oxobutyl phosphate from D-ribulose 5-phosphate: step 1/1. It functions in the pathway cofactor biosynthesis; riboflavin biosynthesis; 5-amino-6-(D-ribitylamino)uracil from GTP: step 1/4. Catalyzes the conversion of D-ribulose 5-phosphate to formate and 3,4-dihydroxy-2-butanone 4-phosphate. In terms of biological role, catalyzes the conversion of GTP to 2,5-diamino-6-ribosylamino-4(3H)-pyrimidinone 5'-phosphate (DARP), formate and pyrophosphate. The polypeptide is Riboflavin biosynthesis protein RibBA (Bacillus cereus (strain AH187)).